We begin with the raw amino-acid sequence, 184 residues long: Photosystem I assembly protein Ycf4 (184 aa).

The next 2 helical transmembrane spans lie at 22-42 (FCWA…GISS) and 64-84 (IVMS…WSTI).

This sequence belongs to the Ycf4 family.

It is found in the plastid. Its subcellular location is the chloroplast thylakoid membrane. In terms of biological role, seems to be required for the assembly of the photosystem I complex. The polypeptide is Photosystem I assembly protein Ycf4 (Piper cenocladum (Ant piper)).